We begin with the raw amino-acid sequence, 310 residues long: Quinolinate synthase (310 aa).

The iminosuccinate site is built by His-27 and Ser-44. Cys-89 provides a ligand contact to [4Fe-4S] cluster. Residues 115–117 and Ser-132 each bind iminosuccinate; that span reads YVN. [4Fe-4S] cluster is bound at residue Cys-175. Iminosuccinate-binding positions include 201 to 203 and Thr-222; that span reads HPE. Cys-267 contributes to the [4Fe-4S] cluster binding site.

Belongs to the quinolinate synthase family. Type 2 subfamily. Requires [4Fe-4S] cluster as cofactor.

It localises to the cytoplasm. The catalysed reaction is iminosuccinate + dihydroxyacetone phosphate = quinolinate + phosphate + 2 H2O + H(+). Its pathway is cofactor biosynthesis; NAD(+) biosynthesis; quinolinate from iminoaspartate: step 1/1. Its function is as follows. Catalyzes the condensation of iminoaspartate with dihydroxyacetone phosphate to form quinolinate. The sequence is that of Quinolinate synthase from Thermus thermophilus (strain ATCC BAA-163 / DSM 7039 / HB27).